The chain runs to 326 residues: Malate dehydrogenase (326 aa).

Residue 11–17 (GAAGQIG) participates in NAD(+) binding. Substrate contacts are provided by Arg92 and Arg98. NAD(+) contacts are provided by residues Asn105, Gln112, and 129 to 131 (VGN). Substrate-binding residues include Asn131 and Arg162. His187 (proton acceptor) is an active-site residue.

The protein belongs to the LDH/MDH superfamily. MDH type 2 family.

The catalysed reaction is (S)-malate + NAD(+) = oxaloacetate + NADH + H(+). Functionally, catalyzes the reversible oxidation of malate to oxaloacetate. The protein is Malate dehydrogenase of Chromobacterium violaceum (strain ATCC 12472 / DSM 30191 / JCM 1249 / CCUG 213 / NBRC 12614 / NCIMB 9131 / NCTC 9757 / MK).